The following is a 633-amino-acid chain: Probable potassium transport system protein Kup 2 (633 aa).

Helical transmembrane passes span 18 to 38 (FLAM…TSPL), 61 to 81 (LISL…VLFL), 109 to 129 (LMFM…MITP), 145 to 165 (PAFH…LFAV), 173 to 193 (VSIF…AAGV), 211 to 231 (AVTF…AVFL), 255 to 275 (WFAV…ALVL), 287 to 307 (LMFP…ATII), 345 to 365 (IYLP…MFMF), 371 to 391 (LATA…VLAF), 405 to 425 (ATAV…ANLF), and 427 to 447 (IHDG…TMWT).

Belongs to the HAK/KUP transporter (TC 2.A.72) family.

It is found in the cell inner membrane. The enzyme catalyses K(+)(in) + H(+)(in) = K(+)(out) + H(+)(out). Its function is as follows. Transport of potassium into the cell. Likely operates as a K(+):H(+) symporter. This chain is Probable potassium transport system protein Kup 2, found in Sinorhizobium medicae (strain WSM419) (Ensifer medicae).